Consider the following 2314-residue polypeptide: Protein Ycf2 (2314 aa).

1653-1660 (GSIGTGRS) contacts ATP.

This sequence belongs to the Ycf2 family.

It localises to the plastid. Its subcellular location is the chloroplast stroma. Functionally, probable ATPase of unknown function. Its presence in a non-photosynthetic plant (Epifagus virginiana) and experiments in tobacco indicate that it has an essential function which is probably not related to photosynthesis. The chain is Protein Ycf2 from Piper cenocladum (Ant piper).